Here is a 287-residue protein sequence, read N- to C-terminus: Damage-control phosphatase PH1575 (287 aa).

Positions 7 to 10 (CLTC) match the Subfamily I CxxC motif motif. Residues D156, N157, and D191 each contribute to the Mn(2+) site. The Subfamily I GNFE motif signature appears at 243-246 (GNFE). The Subfamily I KC motif signature appears at 263-264 (KC).

It belongs to the damage-control phosphatase family. Nucleotides phosphatase I subfamily. The cofactor is Mn(2+). Ni(2+) is required as a cofactor. Requires [2Fe-2S] cluster as cofactor.

With respect to regulation, activity is strongly promoted by Co(2+), Ni(2+), Mg(2+), Mn(2+), Ca(2+), Zn(2+) and Cu(2+). Activity is inhibited by EDTA. In terms of biological role, metal-dependent phosphatase with probable damage-control functions. Shows phosphatase activity against p-nitrophenyl phosphate (pNPP), but natural substrates have not been identified yet. Low phosphatase activity against 8-oxo nucleotides suggests that it could hydrolyze oxidatively damaged purine nucleotides or their biosynthetic intermediates. The protein is Damage-control phosphatase PH1575 of Pyrococcus horikoshii (strain ATCC 700860 / DSM 12428 / JCM 9974 / NBRC 100139 / OT-3).